The primary structure comprises 369 residues: Fructose-bisphosphate aldolase (369 aa).

Dihydroxyacetone phosphate is bound at residue Asp-40. D-glyceraldehyde 3-phosphate-binding residues include Ser-42 and Thr-45. Arg-49 serves as a coordination point for beta-D-fructose 1,6-bisphosphate. Lys-113 contacts D-glyceraldehyde 3-phosphate. A dihydroxyacetone phosphate-binding site is contributed by Lys-152. Glu-195 lines the D-glyceraldehyde 3-phosphate pocket. The Proton acceptor role is filled by Glu-195. Residues Lys-237, Ser-279, and Gly-280 each coordinate dihydroxyacetone phosphate. The active-site Schiff-base intermediate with dihydroxyacetone phosphate is the Lys-237. Residues 279-281 and Ser-307 each bind beta-D-fructose 1,6-bisphosphate; that span reads SGG. The dihydroxyacetone phosphate site is built by Gly-309 and Arg-310. Position 310 (Arg-310) interacts with beta-D-fructose 1,6-bisphosphate.

It belongs to the class I fructose-bisphosphate aldolase family. In terms of assembly, homotetramer. Interacts with TRAP (via cytoplasmic domain); the interaction prevents substrate binding and thereby inhibits aldolase activity. Interacts with MTRAP (via cytoplasmic domain); MTRAP phosphorylation may increase the binding to FBPA. Interact with RH1 (via cytoplasmic domain). Interacts with RH2b (via cytoplasmic domain). Interacts with RH4 (via cytoplasmic domain). Interacts with AMA1 (via cytoplasmic domain); the interaction is weak, however it may be increased upon AMA1 phosphorylation. Interacts with EBA140 (via cytoplasmic domain); the interaction is weak. Interacts with EBA175 (via cytoplasmic domain); the interaction is weak. Interacts with EBA181 (via cytoplasmic domain); the interaction is weak. Interacts with G-actin and F-actin. May interact with ACT2/actin II; the interaction inhibits FBPA catalytic activity. Interacts with human SLC4A1/band 3 (via N-terminus); the interaction inhibits FBPA catalytic activity.

The protein localises to the cytoplasm. Its subcellular location is the membrane. It localises to the host cell membrane. It catalyses the reaction beta-D-fructose 1,6-bisphosphate = D-glyceraldehyde 3-phosphate + dihydroxyacetone phosphate. It participates in carbohydrate degradation; glycolysis; D-glyceraldehyde 3-phosphate and glycerone phosphate from D-glucose: step 4/4. Its activity is regulated as follows. The cytoplasmic tail of TRAP and probably other adhesins acts as a competitive inhibitor as the binding sites of the glycolytic substrate fructose 1,6-bisphosphate and TRAP partially overlap. Its function is as follows. Plays a key role in glycolysis by catalyzing the cleavage of fructose 1,6-bisphosphate into dihydroxyacetone phosphate and glyceraldehyde 3-phosphate. Independently of its catalytic activity, connects the actin filaments, and thus the actomyosin motor, to cell surface adhesins of the thrombospondin-related anonymous protein (TRAP), the erythrocyte binding ligand (EBL) and reticulocyte binding homolog (RH) protein families; this interaction is probably involved in transducing the motor force across the parasite surface required for sporozoite and ookinete gliding motility and merozoite invasion. Stimulates actin polymerisation. This chain is Fructose-bisphosphate aldolase, found in Plasmodium falciparum (isolate 3D7).